The sequence spans 458 residues: Bifunctional protein GlmU (458 aa).

The interval 1–229 is pyrophosphorylase; the sequence is MNKFAIVLAA…FDESLGVNDR (229 aa). UDP-N-acetyl-alpha-D-glucosamine-binding positions include 8–11, Lys-22, Gln-72, and 77–78; these read LAAG and GT. Asp-102 is a binding site for Mg(2+). UDP-N-acetyl-alpha-D-glucosamine-binding residues include Gly-139, Glu-154, Asn-169, and Asn-227. Asn-227 contributes to the Mg(2+) binding site. Residues 230-250 are linker; it reads VALSQAEATMRKRINHEHMVN. The N-acetyltransferase stretch occupies residues 251 to 458; that stretch reads GVTLIDPATT…AKKMPHYRGQ (208 aa). The UDP-N-acetyl-alpha-D-glucosamine site is built by Arg-332 and Lys-350. Residue His-362 is the Proton acceptor of the active site. 2 residues coordinate UDP-N-acetyl-alpha-D-glucosamine: Tyr-365 and Asn-376. The acetyl-CoA site is built by Ala-379, Ser-404, Ala-422, and Arg-439.

The protein in the N-terminal section; belongs to the N-acetylglucosamine-1-phosphate uridyltransferase family. It in the C-terminal section; belongs to the transferase hexapeptide repeat family. In terms of assembly, homotrimer. Mg(2+) is required as a cofactor.

It localises to the cytoplasm. It carries out the reaction alpha-D-glucosamine 1-phosphate + acetyl-CoA = N-acetyl-alpha-D-glucosamine 1-phosphate + CoA + H(+). The enzyme catalyses N-acetyl-alpha-D-glucosamine 1-phosphate + UTP + H(+) = UDP-N-acetyl-alpha-D-glucosamine + diphosphate. It participates in nucleotide-sugar biosynthesis; UDP-N-acetyl-alpha-D-glucosamine biosynthesis; N-acetyl-alpha-D-glucosamine 1-phosphate from alpha-D-glucosamine 6-phosphate (route II): step 2/2. It functions in the pathway nucleotide-sugar biosynthesis; UDP-N-acetyl-alpha-D-glucosamine biosynthesis; UDP-N-acetyl-alpha-D-glucosamine from N-acetyl-alpha-D-glucosamine 1-phosphate: step 1/1. The protein operates within bacterial outer membrane biogenesis; LPS lipid A biosynthesis. Functionally, catalyzes the last two sequential reactions in the de novo biosynthetic pathway for UDP-N-acetylglucosamine (UDP-GlcNAc). The C-terminal domain catalyzes the transfer of acetyl group from acetyl coenzyme A to glucosamine-1-phosphate (GlcN-1-P) to produce N-acetylglucosamine-1-phosphate (GlcNAc-1-P), which is converted into UDP-GlcNAc by the transfer of uridine 5-monophosphate (from uridine 5-triphosphate), a reaction catalyzed by the N-terminal domain. The polypeptide is Bifunctional protein GlmU (Lactococcus lactis subsp. cremoris (strain MG1363)).